The following is a 411-amino-acid chain: Bestrophin homolog 26 (411 aa).

Helical transmembrane passes span 30–50 (FTAI…FMVI), 73–93 (SHQE…SSVV), 235–255 (IPIP…YFAV), and 272–292 (TWIT…MGWM).

This sequence belongs to the anion channel-forming bestrophin (TC 1.A.46) family. Calcium-sensitive chloride channel subfamily. As to quaternary structure, forms oligomers.

It is found in the cell membrane. In terms of biological role, forms chloride channels. This Caenorhabditis elegans protein is Bestrophin homolog 26 (best-26).